A 123-amino-acid polypeptide reads, in one-letter code: MADETKPTRKGSPPIKVYCLPDERRAIEEKAAAAGMSLSAYLLAVGQGYKITGVVDYEHVRELARINGDLGRLGGLLKLWLTDDPRTARFGDATILALLAKIEEKQDELGKVMMGVVRPRAEP.

In terms of assembly, monomer.

It localises to the cytoplasm. Transfer of plasmid RP4 during bacterial conjugation requires the plasmid-encoded TraJ protein, which binds to a 19-base pair invert sequence repetition within the transfer origin. TraJ protein is bound to only one side of the DNA helix. This nucleoprotein structure is the initial complex in the pathway to assemble a functional relaxosome. This is Protein TraJ (traJ) from Escherichia coli.